We begin with the raw amino-acid sequence, 406 residues long: Peptide transporter imqD (406 aa).

The segment at 1–25 (MTAPADSTEKSETSETTTLQTTEVS) is disordered. A compositionally biased stretch (low complexity) spans 14–25 (SETTTLQTTEVS). A run of 6 helical transmembrane segments spans residues 184 to 204 (GLVACRVILGFILFFTCLSQA), 220 to 240 (IPNDTITAMNPIFCVIMGPVI), 262 to 282 (ATGFIMMSASMAFAAGVQKII), 309 to 329 (VFLQTPTYIILAVAEIFSFVT), 344 to 364 (AVVQALGQLGAAAGSAIGIAI), and 373 to 393 (LIWMYTGLAVAMFLVAVVFWI).

Belongs to the major facilitator superfamily. Proton-dependent oligopeptide transporter (POT/PTR) (TC 2.A.17) family.

It localises to the membrane. Peptide transporter; part of the gene cluster that mediates the biosynthesis of imizoquins A to D, tripeptide-derived alkaloids that serve a protective role against oxidative stress that are essential for normal germination. This chain is Peptide transporter imqD, found in Aspergillus flavus (strain ATCC 200026 / FGSC A1120 / IAM 13836 / NRRL 3357 / JCM 12722 / SRRC 167).